We begin with the raw amino-acid sequence, 443 residues long: 3-ketoacyl-CoA thiolase 1, peroxisomal (443 aa).

Residues 1–30 constitute a peroxisome transit peptide; sequence MEKATERQRILLRHLQPSSSSDASLSASAC. The active-site Acyl-thioester intermediate is the Cys130. Residues His385 and Cys417 each act as proton acceptor in the active site.

It belongs to the thiolase-like superfamily. Thiolase family. Homodimer. As to expression, low levels in seedlings and leaves.

The protein resides in the peroxisome. The catalysed reaction is an acyl-CoA + acetyl-CoA = a 3-oxoacyl-CoA + CoA. It participates in lipid metabolism; fatty acid metabolism. Its function is as follows. Involved in fatty-acid beta-oxidation prior to gluconeogenesis during germination and subsequent seedling growth. Implicated in jasmonic acid (JA) biosynthesis. The polypeptide is 3-ketoacyl-CoA thiolase 1, peroxisomal (KAT1) (Arabidopsis thaliana (Mouse-ear cress)).